A 273-amino-acid chain; its full sequence is Ribosomal RNA small subunit methyltransferase A (273 aa).

Residues asparagine 25, leucine 27, glycine 52, glutamate 73, aspartate 99, and asparagine 118 each coordinate S-adenosyl-L-methionine.

This sequence belongs to the class I-like SAM-binding methyltransferase superfamily. rRNA adenine N(6)-methyltransferase family. RsmA subfamily.

It is found in the cytoplasm. The catalysed reaction is adenosine(1518)/adenosine(1519) in 16S rRNA + 4 S-adenosyl-L-methionine = N(6)-dimethyladenosine(1518)/N(6)-dimethyladenosine(1519) in 16S rRNA + 4 S-adenosyl-L-homocysteine + 4 H(+). In terms of biological role, specifically dimethylates two adjacent adenosines (A1518 and A1519) in the loop of a conserved hairpin near the 3'-end of 16S rRNA in the 30S particle. May play a critical role in biogenesis of 30S subunits. This is Ribosomal RNA small subunit methyltransferase A from Novosphingobium aromaticivorans (strain ATCC 700278 / DSM 12444 / CCUG 56034 / CIP 105152 / NBRC 16084 / F199).